The chain runs to 90 residues: Elongation factor 1-beta (90 aa).

This sequence belongs to the EF-1-beta/EF-1-delta family.

Functionally, promotes the exchange of GDP for GTP in EF-1-alpha/GDP, thus allowing the regeneration of EF-1-alpha/GTP that could then be used to form the ternary complex EF-1-alpha/GTP/AAtRNA. This is Elongation factor 1-beta from Staphylothermus marinus (strain ATCC 43588 / DSM 3639 / JCM 9404 / F1).